A 491-amino-acid chain; its full sequence is UDP-N-acetylmuramate--L-alanine ligase (491 aa).

Position 126–132 (126–132) interacts with ATP; it reads GTHGKTT.

The protein belongs to the MurCDEF family.

It is found in the cytoplasm. The catalysed reaction is UDP-N-acetyl-alpha-D-muramate + L-alanine + ATP = UDP-N-acetyl-alpha-D-muramoyl-L-alanine + ADP + phosphate + H(+). Its pathway is cell wall biogenesis; peptidoglycan biosynthesis. Cell wall formation. The polypeptide is UDP-N-acetylmuramate--L-alanine ligase (Shigella sonnei (strain Ss046)).